Consider the following 463-residue polypeptide: A-type ATP synthase subunit B (463 aa).

Belongs to the ATPase alpha/beta chains family. In terms of assembly, has multiple subunits with at least A(3), B(3), C, D, E, F, H, I and proteolipid K(x).

Its subcellular location is the cell membrane. Component of the A-type ATP synthase that produces ATP from ADP in the presence of a proton gradient across the membrane. The B chain is a regulatory subunit. In Thermococcus gammatolerans (strain DSM 15229 / JCM 11827 / EJ3), this protein is A-type ATP synthase subunit B.